Here is a 632-residue protein sequence, read N- to C-terminus: Phosphatidylinositol 3,4,5-trisphosphate 3-phosphatase and protein-tyrosine-phosphatase PTEN2B (632 aa).

Residues Met-1–Ser-12 show a composition bias toward polar residues. Residues Met-1 to Ser-98 are disordered. The segment covering Ser-39–Ser-48 has biased composition (basic and acidic residues). Over residues Met-63–Leu-73 the composition is skewed to polar residues. The span at Ser-87–Ser-98 shows a compositional bias: low complexity. Residues Arg-189–Phe-368 enclose the Phosphatase tensin-type domain. The active-site Phosphocysteine intermediate is the Cys-307. The C2 tensin-type domain maps to Glu-375–Pro-502. Positions Asn-504–Asn-603 are disordered. Residues Ser-505 to Ser-527 are compositionally biased toward low complexity. Residues Lys-535 to Gly-549 show a composition bias toward acidic residues. A Phosphoserine modification is found at Ser-541. A compositionally biased stretch (polar residues) spans Asn-550–His-571. Residues Ala-584–Ser-594 show a composition bias toward low complexity.

This sequence belongs to the PTEN phosphatase protein family. In terms of tissue distribution, expressed, at low levels, in seedlings, roots, stems, leaves, flowers and siliques. However, at protein level, not observed in older leaves, flowers and siliques.

The enzyme catalyses O-phospho-L-tyrosyl-[protein] + H2O = L-tyrosyl-[protein] + phosphate. The catalysed reaction is a 1,2-diacyl-sn-glycero-3-phospho-(1D-myo-inositol-3,4,5-trisphosphate) + H2O = a 1,2-diacyl-sn-glycero-3-phospho-(1D-myo-inositol-4,5-bisphosphate) + phosphate. In terms of biological role, protein tyrosine phosphatase that also exhibits a weak lipid phosphatase activity towards PtdIns(3)P. This Arabidopsis thaliana (Mouse-ear cress) protein is Phosphatidylinositol 3,4,5-trisphosphate 3-phosphatase and protein-tyrosine-phosphatase PTEN2B.